Here is a 199-residue protein sequence, read N- to C-terminus: NAD(P)H dehydrogenase (quinone) (199 aa).

The region spanning 4–190 is the Flavodoxin-like domain; the sequence is ILVLYYSMYG…TIARYQGEHV (187 aa). FMN is bound by residues 10–15 and 79–81; these read SMYGHI and TRF. Residue tyrosine 12 participates in NAD(+) binding. Tryptophan 99 lines the substrate pocket. Residues 114–119 and histidine 134 contribute to the FMN site; that span reads STGTGG.

Belongs to the WrbA family. FMN serves as cofactor.

The enzyme catalyses a quinone + NADH + H(+) = a quinol + NAD(+). It carries out the reaction a quinone + NADPH + H(+) = a quinol + NADP(+). The chain is NAD(P)H dehydrogenase (quinone) from Serratia proteamaculans (strain 568).